The primary structure comprises 951 residues: Pentatricopeptide repeat-containing protein At4g19220, mitochondrial (951 aa).

The N-terminal 63 residues, M1 to P63, are a transit peptide targeting the mitochondrion. PPR repeat units lie at residues D121–K151, D152–F186, D187–G221, D222–R252, D253–A287, D288–P322, H325–R355, D356–V386, D392–S426, A428–R458, D459–E489, S496–D530, N531–T561, D563–R597, D599–S629, D634–S668, W669–E695, N697–A731, N732–N762, S763–N793, N799–K829, and V835–P865. The tract at residues V870–R945 is type E motif.

Belongs to the PPR family. PCMP-E subfamily.

The protein resides in the mitochondrion. The sequence is that of Pentatricopeptide repeat-containing protein At4g19220, mitochondrial (PCMP-E2) from Arabidopsis thaliana (Mouse-ear cress).